A 394-amino-acid polypeptide reads, in one-letter code: DNA repair protein brc-2 (394 aa).

Positions methionine 1–phenylalanine 12 are enriched in basic and acidic residues. Disordered regions lie at residues methionine 1–serine 30 and methionine 56–lysine 136. The tract at residues methionine 1 to aspartate 60 is interaction with rad-51. The interval proline 28–lysine 62 is BRCA2 repeat-like region. The span at methionine 56–serine 73 shows a compositional bias: low complexity. The segment at aspartate 60–phenylalanine 89 is interaction with rad-51-DNA complexes. Residues lysine 124–lysine 134 show a composition bias toward basic residues. Residues tryptophan 371 to serine 389 are required for ssDNA binding.

Interacts (via N-terminus) with rad-51; regulates rad-51 recruitment to sites of DNA double strand breaks. As to expression, expressed in the germline, with highest expression in cells undergoing oogenesis.

It localises to the nucleus. The protein resides in the chromosome. Functionally, required for the homologous recombination repair of DNA double strand breaks, thereby playing a role in chromosome integrity. Acts by targeting rad-51 to sites of DNA damage and stabilizing rad-51-DNA filaments by blocking ATP hydrolysis catalyzed by rad-51. Promotes rad-51 mediated displacement-loop (D-loop) formation during strand invasion between the invading single-stranded DNA (ssDNA) and the homologous duplex DNA. Also functions independently of rad-51 in DNA double-strand break (DSB) repair by promoting DNA single-strand annealing (SSA) when the homologous recombination (HR) and non-homologous end joining (NHEJ) pathways are compromised. Binds selectively to single-stranded (ssDNA) via its C-terminus. Involved in telomere maintenance and replicative senescence. The polypeptide is DNA repair protein brc-2 (Caenorhabditis elegans).